A 119-amino-acid chain; its full sequence is Large ribosomal subunit protein bL20 (119 aa).

It belongs to the bacterial ribosomal protein bL20 family.

Its function is as follows. Binds directly to 23S ribosomal RNA and is necessary for the in vitro assembly process of the 50S ribosomal subunit. It is not involved in the protein synthesizing functions of that subunit. In Legionella pneumophila (strain Paris), this protein is Large ribosomal subunit protein bL20.